A 302-amino-acid polypeptide reads, in one-letter code: tRNA dimethylallyltransferase (302 aa).

Position 21 to 28 (21 to 28 (GPTASGKS)) interacts with ATP. A substrate-binding site is contributed by 23-28 (TASGKS).

It belongs to the IPP transferase family. In terms of assembly, monomer. Mg(2+) serves as cofactor.

It catalyses the reaction adenosine(37) in tRNA + dimethylallyl diphosphate = N(6)-dimethylallyladenosine(37) in tRNA + diphosphate. Its function is as follows. Catalyzes the transfer of a dimethylallyl group onto the adenine at position 37 in tRNAs that read codons beginning with uridine, leading to the formation of N6-(dimethylallyl)adenosine (i(6)A). This chain is tRNA dimethylallyltransferase, found in Paracoccus denitrificans (strain Pd 1222).